The following is a 330-amino-acid chain: Ketol-acid reductoisomerase (NADP(+)) (330 aa).

Positions 1–181 (MNVYYEKDAD…GGTKAGVIET (181 aa)) constitute a KARI N-terminal Rossmann domain. Residues 24–27 (YGSQ), Arg-47, Ser-50, Ser-52, and 82–85 (DQNQ) each bind NADP(+). His-107 is an active-site residue. Residue Gly-133 coordinates NADP(+). In terms of domain architecture, KARI C-terminal knotted spans 182-327 (NFKNETETDL…AKLRNMMSWL (146 aa)). Mg(2+)-binding residues include Asp-190, Glu-194, Glu-226, and Glu-230. Residue Ser-251 participates in substrate binding.

Belongs to the ketol-acid reductoisomerase family. Requires Mg(2+) as cofactor.

It catalyses the reaction (2R)-2,3-dihydroxy-3-methylbutanoate + NADP(+) = (2S)-2-acetolactate + NADPH + H(+). The enzyme catalyses (2R,3R)-2,3-dihydroxy-3-methylpentanoate + NADP(+) = (S)-2-ethyl-2-hydroxy-3-oxobutanoate + NADPH + H(+). The protein operates within amino-acid biosynthesis; L-isoleucine biosynthesis; L-isoleucine from 2-oxobutanoate: step 2/4. It participates in amino-acid biosynthesis; L-valine biosynthesis; L-valine from pyruvate: step 2/4. Functionally, involved in the biosynthesis of branched-chain amino acids (BCAA). Catalyzes an alkyl-migration followed by a ketol-acid reduction of (S)-2-acetolactate (S2AL) to yield (R)-2,3-dihydroxy-isovalerate. In the isomerase reaction, S2AL is rearranged via a Mg-dependent methyl migration to produce 3-hydroxy-3-methyl-2-ketobutyrate (HMKB). In the reductase reaction, this 2-ketoacid undergoes a metal-dependent reduction by NADPH to yield (R)-2,3-dihydroxy-isovalerate. The polypeptide is Ketol-acid reductoisomerase (NADP(+)) (Chlorobium chlorochromatii (strain CaD3)).